A 239-amino-acid chain; its full sequence is Large ribosomal subunit protein uL2 (239 aa).

Residues 200 to 239 (VNHPHGGKEHHIGRPSTVSRRAPPGRKVGHIAARRTGRRK) are disordered. Basic residues predominate over residues 222 to 239 (PPGRKVGHIAARRTGRRK).

The protein belongs to the universal ribosomal protein uL2 family. As to quaternary structure, part of the 50S ribosomal subunit. Forms a bridge to the 30S subunit in the 70S ribosome.

Its function is as follows. One of the primary rRNA binding proteins. Required for association of the 30S and 50S subunits to form the 70S ribosome, for tRNA binding and peptide bond formation. It has been suggested to have peptidyltransferase activity; this is somewhat controversial. Makes several contacts with the 16S rRNA in the 70S ribosome. The polypeptide is Large ribosomal subunit protein uL2 (Thermococcus gammatolerans (strain DSM 15229 / JCM 11827 / EJ3)).